The sequence spans 135 residues: MTLTLRVLAPDQSVFDDTADEIILPSTTGLLGVLPGHISMVTAIDFGVLRVLKNGNWDSIALTGGFAEVESNEVTVLVNKAEMGKNIDSGKAEAELEQAKNQLSQNKDQGNSSEKIKAQETLNKAKAWFQASKSD.

Belongs to the ATPase epsilon chain family. F-type ATPases have 2 components, CF(1) - the catalytic core - and CF(0) - the membrane proton channel. CF(1) has five subunits: alpha(3), beta(3), gamma(1), delta(1), epsilon(1). CF(0) has three main subunits: a, b and c.

It is found in the cellular thylakoid membrane. Its function is as follows. Produces ATP from ADP in the presence of a proton gradient across the membrane. This chain is ATP synthase epsilon chain, found in Prochlorococcus marinus (strain NATL1A).